A 605-amino-acid chain; its full sequence is UvrABC system protein C (605 aa).

In terms of domain architecture, GIY-YIG spans 14–92 (QSCGVYKMIG…IKSLKPSYNI (79 aa)). Positions 202-237 (KEVQRQLFSTMEKCSREMNYELAAVYRDRLKFLQQI) constitute a UVR domain.

It belongs to the UvrC family. As to quaternary structure, interacts with UvrB in an incision complex.

It is found in the cytoplasm. In terms of biological role, the UvrABC repair system catalyzes the recognition and processing of DNA lesions. UvrC both incises the 5' and 3' sides of the lesion. The N-terminal half is responsible for the 3' incision and the C-terminal half is responsible for the 5' incision. The sequence is that of UvrABC system protein C from Wolbachia pipientis subsp. Culex pipiens (strain wPip).